Here is a 272-residue protein sequence, read N- to C-terminus: HMP-PP phosphatase (272 aa).

The active-site Nucleophile is D8. D8, D10, and D212 together coordinate Mg(2+).

It belongs to the HAD-like hydrolase superfamily. Cof family. Requires Mg(2+) as cofactor.

The enzyme catalyses 4-amino-2-methyl-5-(diphosphooxymethyl)pyrimidine + H2O = 4-amino-2-methyl-5-(phosphooxymethyl)pyrimidine + phosphate + H(+). In terms of biological role, catalyzes the hydrolysis of 4-amino-2-methyl-5-hydroxymethylpyrimidine pyrophosphate (HMP-PP) to 4-amino-2-methyl-5-hydroxymethylpyrimidine phosphate (HMP-P). This is HMP-PP phosphatase from Escherichia coli (strain UTI89 / UPEC).